Reading from the N-terminus, the 154-residue chain is Ubiquitin-like protein 4A (154 aa).

In terms of domain architecture, Ubiquitin-like spans 1 to 76 (MILTVKPLQG…LNLVVRPAGE (76 aa)).

As to quaternary structure, component of the bag6/bat3 complex.

It is found in the cytoplasm. Its subcellular location is the cytosol. It localises to the nucleus. In terms of biological role, as part of a cytosolic protein quality control complex, the bag6/bat3 complex, maintains misfolded and hydrophobic patches-containing proteins in a soluble state and participates in their proper delivery to the endoplasmic reticulum or alternatively can promote their sorting to the proteasome where they undergo degradation. The bag6/bat3 complex is involved in the post-translational delivery of tail-anchored/type II transmembrane proteins to the endoplasmic reticulum membrane. Similarly, the bag6/bat3 complex also functions as a sorting platform for proteins of the secretory pathway that are mislocalized to the cytosol either delivering them to the proteasome for degradation or to the endoplasmic reticulum. The bag6/bat3 complex also plays a role in the endoplasmic reticulum-associated degradation (ERAD), a quality control mechanism that eliminates unwanted proteins of the endoplasmic reticulum through their retrotranslocation to the cytosol and their targeting to the proteasome. It maintains these retrotranslocated proteins in an unfolded yet soluble state condition in the cytosol to ensure their proper delivery to the proteasome. The protein is Ubiquitin-like protein 4A (ubl4a) of Esox lucius (Northern pike).